Reading from the N-terminus, the 391-residue chain is Steroid side-chain-cleaving aldolase (391 aa).

Tyr-294 serves as the catalytic Proton acceptor. Tyr-344 serves as the catalytic Proton donor.

Belongs to the thiolase-like superfamily. In terms of assembly, homodimer. Interacts with the ChsH1/ChsH2 hydratase via the DUF35 C-terminal region of ChsH2 (ChsH2-DUF35).

It catalyses the reaction 17-hydroxy-3-oxochol-4-en-22-oyl-CoA = androst-4-ene-3,17-dione + propanoyl-CoA. Its function is as follows. Probably involved in bile acid degradation. In vitro, when associated with the ChsH1/ChsH2 hydratase, catalyzes the retroaldol cleavage of 17-hydroxy-3-oxo-4-pregnene-20-carboxyl-CoA (17-HOPC-CoA), forming androst-4-ene-3,17-dione and propionyl-CoA. The in vivo substrate is probably a closely analogous bile acid degradation metabolite. This chain is Steroid side-chain-cleaving aldolase, found in Thermomonospora curvata (strain ATCC 19995 / DSM 43183 / JCM 3096 / KCTC 9072 / NBRC 15933 / NCIMB 10081 / Henssen B9).